The primary structure comprises 194 residues: ATP-dependent Clp protease proteolytic subunit (194 aa).

Ser99 functions as the Nucleophile in the catalytic mechanism. Residue His124 is part of the active site.

Belongs to the peptidase S14 family. In terms of assembly, fourteen ClpP subunits assemble into 2 heptameric rings which stack back to back to give a disk-like structure with a central cavity, resembling the structure of eukaryotic proteasomes.

It localises to the cytoplasm. It catalyses the reaction Hydrolysis of proteins to small peptides in the presence of ATP and magnesium. alpha-casein is the usual test substrate. In the absence of ATP, only oligopeptides shorter than five residues are hydrolyzed (such as succinyl-Leu-Tyr-|-NHMec, and Leu-Tyr-Leu-|-Tyr-Trp, in which cleavage of the -Tyr-|-Leu- and -Tyr-|-Trp bonds also occurs).. Functionally, cleaves peptides in various proteins in a process that requires ATP hydrolysis. Has a chymotrypsin-like activity. Plays a major role in the degradation of misfolded proteins. This chain is ATP-dependent Clp protease proteolytic subunit, found in Borrelia garinii subsp. bavariensis (strain ATCC BAA-2496 / DSM 23469 / PBi) (Borreliella bavariensis).